A 121-amino-acid chain; its full sequence is Small ribosomal subunit protein uS13 (121 aa).

Residues 93 to 121 form a disordered region; it reads RGLPMRGQRTRTNARTRKGPRKAAQSLKK.

It belongs to the universal ribosomal protein uS13 family. As to quaternary structure, part of the 30S ribosomal subunit. Forms a loose heterodimer with protein S19. Forms two bridges to the 50S subunit in the 70S ribosome.

Its function is as follows. Located at the top of the head of the 30S subunit, it contacts several helices of the 16S rRNA. In the 70S ribosome it contacts the 23S rRNA (bridge B1a) and protein L5 of the 50S subunit (bridge B1b), connecting the 2 subunits; these bridges are implicated in subunit movement. Contacts the tRNAs in the A and P-sites. This Albidiferax ferrireducens (strain ATCC BAA-621 / DSM 15236 / T118) (Rhodoferax ferrireducens) protein is Small ribosomal subunit protein uS13.